The following is a 125-amino-acid chain: Calcitonin receptor-stimulating peptide 1 (125 aa).

The first 25 residues, 1-25 (MGFWKFPPFLVLSILVLYQAGMFHA), serve as a signal peptide directing secretion. Residues 26 to 77 (APFRSVFDGRFDPATLDEEESRLLLAAMVNDYEQMRARESEKAQKTEGSRIQ) constitute a propeptide that is removed on maturation. Cys-81 and Cys-86 form a disulfide bridge.

This sequence belongs to the calcitonin family.

The protein resides in the secreted. Stimulates cAMP production in porcine kidney cell line LLC-PK1 via the calcitonin receptor (CT) but not via the CT-like (CL) receptor. This is Calcitonin receptor-stimulating peptide 1 (CRSP1) from Capra hircus (Goat).